We begin with the raw amino-acid sequence, 393 residues long: GDP-mannose:cellobiosyl-diphosphopolyprenol alpha-mannosyltransferase (393 aa).

The protein belongs to the glycosyltransferase group 1 family. Glycosyltransferase 4 subfamily.

The enzyme catalyses beta-D-Glc-(1-&gt;4)-alpha-D-Glc-di-trans,octa-cis-undecaprenyl diphosphate + GDP-alpha-D-mannose = alpha-D-Man-(1-&gt;3)-beta-D-Glc-(1-&gt;4)-alpha-D-Glc-1-di-trans,octa-cis-undecaprenyl diphosphate + GDP + H(+). In terms of biological role, involved in the biosynthesis of the exopolysaccharide acetan, a water-soluble polysaccharide involved in production of bacterial cellulose (BC). The protein is GDP-mannose:cellobiosyl-diphosphopolyprenol alpha-mannosyltransferase (aceC) of Komagataeibacter xylinus (Gluconacetobacter xylinus).